The chain runs to 75 residues: Large ribosomal subunit protein bL31 (75 aa).

This sequence belongs to the bacterial ribosomal protein bL31 family. Type A subfamily. Part of the 50S ribosomal subunit.

Binds the 23S rRNA. In Chlorobium phaeobacteroides (strain BS1), this protein is Large ribosomal subunit protein bL31.